Here is a 1337-residue protein sequence, read N- to C-terminus: Phosphoribosylformylglycinamidine synthase (1337 aa).

Phosphoserine is present on Ser-215. Residues 322–333 (GATTGTGGRIRD) and 402–404 (AGF) contribute to the ATP site. Phosphothreonine is present on residues Thr-619 and Thr-622. Ala-705 contributes to the ATP binding site. 4 residues coordinate Mg(2+): Asp-706, Glu-745, Asn-749, and Asp-908. ATP is bound at residue Ser-910. A Glutamine amidotransferase type-1 domain is found at 1063–1301 (RVAILREEGS…ALMPHPERAV (239 aa)). The active-site Nucleophile is Cys-1157. Active-site residues include His-1296 and Glu-1298.

This sequence in the N-terminal section; belongs to the FGAMS family.

The protein resides in the cytoplasm. The catalysed reaction is N(2)-formyl-N(1)-(5-phospho-beta-D-ribosyl)glycinamide + L-glutamine + ATP + H2O = 2-formamido-N(1)-(5-O-phospho-beta-D-ribosyl)acetamidine + L-glutamate + ADP + phosphate + H(+). It participates in purine metabolism; IMP biosynthesis via de novo pathway; 5-amino-1-(5-phospho-D-ribosyl)imidazole from N(2)-formyl-N(1)-(5-phospho-D-ribosyl)glycinamide: step 1/2. Phosphoribosylformylglycinamidine synthase involved in the purines biosynthetic pathway. Catalyzes the ATP-dependent conversion of formylglycinamide ribonucleotide (FGAR) and glutamine to yield formylglycinamidine ribonucleotide (FGAM) and glutamate. In Mus musculus (Mouse), this protein is Phosphoribosylformylglycinamidine synthase (Pfas).